Here is a 729-residue protein sequence, read N- to C-terminus: Fatty acid oxidation complex subunit alpha (729 aa).

The tract at residues 1 to 189 (MLYKGDTLYL…KIGLVDGVVK (189 aa)) is enoyl-CoA hydratase/isomerase. A substrate-binding site is contributed by aspartate 296. The tract at residues 311 to 729 (ETPKQAAVLG…ARPVGDLKTA (419 aa)) is 3-hydroxyacyl-CoA dehydrogenase. NAD(+) contacts are provided by residues methionine 324, aspartate 343, 400–402 (VVE), lysine 407, and serine 429. Histidine 450 serves as the catalytic For 3-hydroxyacyl-CoA dehydrogenase activity. NAD(+) is bound at residue asparagine 453. Substrate-binding residues include asparagine 500 and tyrosine 660. Positions 708-729 (RHNEPYYPPVEPARPVGDLKTA) are disordered.

It in the N-terminal section; belongs to the enoyl-CoA hydratase/isomerase family. The protein in the C-terminal section; belongs to the 3-hydroxyacyl-CoA dehydrogenase family. In terms of assembly, heterotetramer of two alpha chains (FadB) and two beta chains (FadA).

It catalyses the reaction a (3S)-3-hydroxyacyl-CoA + NAD(+) = a 3-oxoacyl-CoA + NADH + H(+). The catalysed reaction is a (3S)-3-hydroxyacyl-CoA = a (2E)-enoyl-CoA + H2O. It carries out the reaction a 4-saturated-(3S)-3-hydroxyacyl-CoA = a (3E)-enoyl-CoA + H2O. The enzyme catalyses (3S)-3-hydroxybutanoyl-CoA = (3R)-3-hydroxybutanoyl-CoA. It catalyses the reaction a (3Z)-enoyl-CoA = a 4-saturated (2E)-enoyl-CoA. The catalysed reaction is a (3E)-enoyl-CoA = a 4-saturated (2E)-enoyl-CoA. It participates in lipid metabolism; fatty acid beta-oxidation. In terms of biological role, involved in the aerobic and anaerobic degradation of long-chain fatty acids via beta-oxidation cycle. Catalyzes the formation of 3-oxoacyl-CoA from enoyl-CoA via L-3-hydroxyacyl-CoA. It can also use D-3-hydroxyacyl-CoA and cis-3-enoyl-CoA as substrate. The sequence is that of Fatty acid oxidation complex subunit alpha from Escherichia coli O6:H1 (strain CFT073 / ATCC 700928 / UPEC).